A 229-amino-acid polypeptide reads, in one-letter code: Large ribosomal subunit protein uL1 (229 aa).

It belongs to the universal ribosomal protein uL1 family. In terms of assembly, part of the 50S ribosomal subunit.

Binds directly to 23S rRNA. The L1 stalk is quite mobile in the ribosome, and is involved in E site tRNA release. Functionally, protein L1 is also a translational repressor protein, it controls the translation of the L11 operon by binding to its mRNA. This chain is Large ribosomal subunit protein uL1, found in Actinobacillus succinogenes (strain ATCC 55618 / DSM 22257 / CCUG 43843 / 130Z).